Here is a 596-residue protein sequence, read N- to C-terminus: Heat shock factor protein 5 (596 aa).

The DNA-binding element occupies 10–200 (NPNNFPAKLW…FHRSFRRDSL (191 aa)). Positions 541-576 (EMGPASKPSEDTGLATPARYREHRSNSQQGKSPDLH) are disordered. The residue at position 572 (S572) is a Phosphoserine.

Belongs to the HSF family. In terms of assembly, homooligomer.

The protein resides in the nucleus. It is found in the chromosome. DNA-binding transcription factor that is essential for male fertility, spermatogenesis and meiotic prophase progression in spermatocytes under non-stress conditions. Positvely and negatively regulates gene expression to ensure progression of meiotic prophase beyond pachytene stage in spermatocytes. Plays a role in male germline meiotic sex chromosome remodeling and silencing through regulation of SMARCA4. The chain is Heat shock factor protein 5 (HSF5) from Homo sapiens (Human).